Consider the following 353-residue polypeptide: UPF0283 membrane protein KPN78578_12740 (353 aa).

The next 3 membrane-spanning stretches (helical) occupy residues 70 to 90 (MVSAGLAIFGVSVVAQGVQWT), 99 to 119 (WIALGGCVAGALIVGAGVGSL), and 213 to 233 (ESTLMIAVSPLALVDMAFIAW).

The protein belongs to the UPF0283 family.

The protein localises to the cell inner membrane. This is UPF0283 membrane protein KPN78578_12740 from Klebsiella pneumoniae subsp. pneumoniae (strain ATCC 700721 / MGH 78578).